A 264-amino-acid chain; its full sequence is Homeobox protein vent1 (264 aa).

Basic and acidic residues-rich tracts occupy residues 16–26 and 44–59; these read KEEATDGKDSM and YAKE…DVQE. The tract at residues 16–140 is disordered; that stretch reads KEEATDGKDS…RLRTAFTPQQ (125 aa). The segment covering 60–80 has biased composition (polar residues); it reads HTTSFQCSLGEQVINRPSANP. A compositionally biased stretch (basic and acidic residues) spans 117–130; sequence TEQREKSPKSDLQR. A DNA-binding region (homeobox) is located at residues 129–188; it reads QRRLRTAFTPQQISKLEQAFNKQRYLGAPERKKLATSLQLSEIQVKTWFQNRRMKLKRQI.

Expressed in the ventral marginal zone of gastrulae. At stage 11.5, also expressed in the ventral region of the animal cap (ectoderm). At the end of gastrulation, predominantly localized to the ventral and lateral regions of the closing slit blastopore. At early tail bud stage, expression is maintained only in the forming proctodeum.

The protein resides in the nucleus. Transcriptional repressor. Cooperates with vent2 in a ventral signaling pathway downstream of bmp4, which antagonizes the Spemann organizer and dorsal mesoderm formation, and leads to ventral mesoderm formation. Acts downstream of bmp4 to repress transcription of foxa4-B/XFD-1'. Binds to DNA with preference for the target sequence 5'-CTATT[T/C]G-3'. Also binds 5'-TGCATTTTG-3' at a lower frequency, and occasionally 5'-TTGATC-3'. Binds to the homeobox 2 (HBX2) repressor element in the promoter of the myf5 gene and represses myf5 transcription in the ventral domain. In Xenopus laevis (African clawed frog), this protein is Homeobox protein vent1 (vent1).